Here is a 212-residue protein sequence, read N- to C-terminus: Ependymin (212 aa).

The signal sequence occupies residues 1 to 20; that stretch reads MRLTGLLCVALWSASAVVLA. Asn69, Asn92, and Asn112 each carry an N-linked (GlcNAc...) asparagine glycan.

It belongs to the ependymin family. As to quaternary structure, forms disulfide-linked dimers. Post-translationally, binds calcium through the terminal sialic acids. In terms of tissue distribution, EPDs are synthesized in the meninx and secreted in the cerebrospinal fluid.

It localises to the secreted. Its function is as follows. May play a role in neural plasticity. May be involved during axon regeneration. This is Ependymin (epd) from Clupea harengus (Atlantic herring).